We begin with the raw amino-acid sequence, 458 residues long: Neuronal acetylcholine receptor subunit beta-3 (458 aa).

Positions 1–21 are cleaved as a signal peptide; sequence MLPDFMLVLIVLGIPSSATTG. Residues 22-237 are Extracellular-facing; it reads FNSIAENEDA…VLRRLPLFYT (216 aa). N-linked (GlcNAc...) asparagine glycans are attached at residues Asn51, Asn138, and Asn166. Cys153 and Cys167 are oxidised to a cystine. 3 helical membrane-spanning segments follow: residues 238–258, 267–287, and 300–320; these read LFLI…FYLP, LSTS…EIIP, and LLFI…VINV. Over 321 to 428 the chain is Cytoplasmic; sequence HHRSSSTYHP…WKFVAQVLDR (108 aa). A helical transmembrane segment spans residues 429-449; sequence IFLWLFLIVSVTGSVLIFTPA.

The protein belongs to the ligand-gated ion channel (TC 1.A.9) family. Acetylcholine receptor (TC 1.A.9.1) subfamily. Beta-3/CHRNB3 sub-subfamily. In terms of assembly, neuronal AChR seems to be composed of two different type of subunits: alpha and beta. CHRNB3/beta-3 subunit is only able to form functional nAChRs when co-assembled with another beta subunit. Participates in pentameric assemblies along with CHRNA4/alpha-4 and CHRNB2/beta-2 subunits and with CHRNA6/alpha-6 as well, forming stoichiometries such as (CHRNA3:CHRNB4)2:CHRNB3, (CHRNA4:CHRNB2)2:CHRNB3 or (CHRNA6:CHRNB2)2:CHRNB3.

The protein localises to the synaptic cell membrane. It is found in the cell membrane. It catalyses the reaction Ca(2+)(in) = Ca(2+)(out). The catalysed reaction is K(+)(in) = K(+)(out). The enzyme catalyses Na(+)(in) = Na(+)(out). With respect to regulation, activated by a myriad of ligands such as acetylcholine, cytisine, nicotine, choline and epibatidine. In terms of biological role, component of neuronal acetylcholine receptors (nAChRs) that function as pentameric, ligand-gated cation channels with high calcium permeability among other activities. nAChRs are excitatory neurotrasnmitter receptors formed by a collection of nAChR subunits known to mediate synaptic transmission in the nervous system and the neuromuscular junction. Each nAchR subunit confers differential attributes to channel properties, including activation, deactivation and desensitization kinetics, pH sensitivity, cation permeability, and binding to allosteric modulators. Has an accessory rather than functional role and is only able to form functional nAChRs when co-assembled with another beta subunit. Participates in pentameric assemblies along with CHRNA3, CHRNA4, CHRNA6, CHRNB2 and CHRNB4. Modulates receptor assembly and increases receptor sensitivity to nicotine when associated with CHRNB2, CHRNA4 and/or CHRNA6 as well as CHRNA3 and CHRNB4. Seems to play a role in nicotine addiction. The protein is Neuronal acetylcholine receptor subunit beta-3 of Homo sapiens (Human).